We begin with the raw amino-acid sequence, 1287 residues long: MSVISKVSYSLYSQNEINATDININYVKDDDEVGTVKDSRLGATDGVLCRTCNRTELECFGHWGKVRIYENIIIKPEYISEVIRILGHICLTCGLLRSREPYTVNISSLTSGELKKLKDKISSKKKSCWNSRCMQPYQKVNFSKKKVCLVNKTDEFCVPNALVYEKITSIHHKFWPVLDIHQDPATLFYRGYFSIPPLLIRPVISFWIDNVPKDTNELTYLLGVIVKHCNANADEPTIQKAIIEYDNIKLISTNSTTNNLSYITSGKTNMLRSFVVARRKDQTARSVLGPDSSLDITEVGIPDYVRNTLTEKIFINAFTIDKVKDMFQRGEIKYYFNKQLHQLTKIKQNKFIKNKIHLLPGDWVETNIQEFTNIIFGRQPSLHRYNVISSSVRKTEEDTIKIPPGIANSQNADFDGDEEWTIVEQNPKSVIEQSILMYPTTLLKHDVHGMPVYGSIQDEILAAYNLFREYDLTQDEVLNILGKYGLEFLTDYERKDKYTGKDIFKFLINEPEINYPGIICNGEIIAENIDSNFIVSMKHMSISGLITDYKSSVEGIKFINKASYVFKRYLKIYGFSITFRNLCPDFEFTKKLREQNIKKINDIKHSYVKYLYDVANGDIIPLSRSDEMDAVDSILSGLTNFNIQEIEKYMKEVISKDPDNSLMKMSCAGYKVNPTELMYILGTYGQQRIDGEPIDTKIYGRVLPYFLPDSKDPEGKGYILNSLIQGLTGSQYYYAMLIARSQSTDIVCETSRTGTLARKIIKKMEDMVVDSYGQIVYGNTLVKYAANYTKIQGSVCKSVELIYPDESLTWFLEISALWDKLKNGFIYNQGQKIAKYILAPFNFKVFMKLDETNPMKSKDLYDKIQLVIKDVRENYFFDVTSIDFIEYVFLTHLNPSRVKVSEDTANLIFEKLYEKLNYTLGGGTPIGIISAQVLSEKFTQQALSSFHTTEKSGGIKRKLGFNEFNQLTNLSKNKTEIITLISDDITKLQTIKMNFEFVYLGELFPEITIEEDKNYYRIDINVNRLYIKRNQLTELIVEYMLEKFVSYSVLVKNWGMETNIINEHIIRFSLFIVFTEPVNLNKNKFMMMLPGAANKGKISKYKIPISEYQSYTDYNKTVKLYRLTVELMGLKELGTFDLVNVNVIPGVWNTYEIFGIESAKSYLCEALLSTYGEGLDYLYQPCDLLASLICLNYEPESINKFKFGPVSALKRATFGDNKAIINAALYKKTEPVNDNSSCHFFSKVPKIGTGYYKYFIDLEKFLRIKKTISEKLIDKKLVDIGDNITDF.

The protein belongs to the poxviridae DNA-directed RNA polymerase 147 kDa subunit family. As to quaternary structure, the DNA-dependent RNA polymerase used for intermediate and late genes expression consists of eight subunits Rpo30/OPG66, Rpo7/OPG90, Rpo22/OPG103, Rpo147/OPG105, Rpo18/OPG119, Rpo19/OPG131, Rpo132/OPG151 and Rpo35/OPG156. The same holoenzyme, with the addition of the transcription-specificity factor OPG109, is used for early gene expression.

Its subcellular location is the virion. It catalyses the reaction RNA(n) + a ribonucleoside 5'-triphosphate = RNA(n+1) + diphosphate. Part of the DNA-dependent RNA polymerase which catalyzes the transcription of viral DNA into RNA using the four ribonucleoside triphosphates as substrates. Responsible for the transcription of early, intermediate and late genes. DNA-dependent RNA polymerase associates with the early transcription factor (ETF), itself composed of OPG118 and OPG133, thereby allowing the early genes transcription. Late transcription, and probably also intermediate transcription, require newly synthesized RNA polymerase. The chain is DNA-directed RNA polymerase 147 kDa polypeptide (OPG105) from Fowlpox virus (strain NVSL) (FPV).